A 157-amino-acid polypeptide reads, in one-letter code: Ribosomal RNA large subunit methyltransferase H (157 aa).

S-adenosyl-L-methionine-binding positions include Leu74, Gly106, and 125–130 (LSDMTL).

It belongs to the RNA methyltransferase RlmH family. As to quaternary structure, homodimer.

The protein resides in the cytoplasm. It catalyses the reaction pseudouridine(1915) in 23S rRNA + S-adenosyl-L-methionine = N(3)-methylpseudouridine(1915) in 23S rRNA + S-adenosyl-L-homocysteine + H(+). Functionally, specifically methylates the pseudouridine at position 1915 (m3Psi1915) in 23S rRNA. The sequence is that of Ribosomal RNA large subunit methyltransferase H from Desulfovibrio desulfuricans (strain ATCC 27774 / DSM 6949 / MB).